The chain runs to 426 residues: MQLTPLHVTGGRQLGGEIAVQHSKNAALPIIVATLLSSEPITLHGIPRLSDVYTILELMHHLGTRHAWVGPNSLTLHTPEIENTDAPYALVSKMRASFIVLGAILARAGTATVSMPGGCAWGPRPVDQHVKALRALGAEVIEDGGNFFAHREGSLNGSFVFELLTVGGTHNAILAAALGEGTVTLENASIDTDVVDVIEFLNALGARIEGAGTNTITIHGVKELHGGEYTVIPDRIEAGTFMMLAAATRSRLTLTNVRPDHLRAVTSKLAEMGVDIQEDGNRMVVDARGRDLKPVNVTTQSYPGFPTDLQPQMSALLATVPGTSVIQDPVYPDRLTHVAELHRMGATITVSGYTQVIQGGTLHAAPVKAADLRAGAALFIAGLTCEGETVIDGVQYLNRGYERLAERLRGIGGEVMQPEPMLAADD.

24–25 (KN) is a phosphoenolpyruvate binding site. R95 serves as a coordination point for UDP-N-acetyl-alpha-D-glucosamine. Residue C119 is the Proton donor of the active site. Position 119 is a 2-(S-cysteinyl)pyruvic acid O-phosphothioketal (C119). UDP-N-acetyl-alpha-D-glucosamine is bound by residues 124 to 128 (RPVDQ), D308, and V330.

It belongs to the EPSP synthase family. MurA subfamily.

Its subcellular location is the cytoplasm. It catalyses the reaction phosphoenolpyruvate + UDP-N-acetyl-alpha-D-glucosamine = UDP-N-acetyl-3-O-(1-carboxyvinyl)-alpha-D-glucosamine + phosphate. The protein operates within cell wall biogenesis; peptidoglycan biosynthesis. In terms of biological role, cell wall formation. Adds enolpyruvyl to UDP-N-acetylglucosamine. In Deinococcus radiodurans (strain ATCC 13939 / DSM 20539 / JCM 16871 / CCUG 27074 / LMG 4051 / NBRC 15346 / NCIMB 9279 / VKM B-1422 / R1), this protein is UDP-N-acetylglucosamine 1-carboxyvinyltransferase.